The following is a 162-amino-acid chain: Protein-export protein SecB 2 (162 aa).

It belongs to the SecB family. As to quaternary structure, homotetramer, a dimer of dimers. One homotetramer interacts with 1 SecA dimer.

The protein localises to the cytoplasm. Functionally, one of the proteins required for the normal export of preproteins out of the cell cytoplasm. It is a molecular chaperone that binds to a subset of precursor proteins, maintaining them in a translocation-competent state. It also specifically binds to its receptor SecA. This Polaromonas naphthalenivorans (strain CJ2) protein is Protein-export protein SecB 2.